Consider the following 350-residue polypeptide: Hydroxymethylglutaryl-CoA synthase (350 aa).

The Proton donor/acceptor role is filled by glutamate 83. The active-site Acyl-thioester intermediate is cysteine 115. (3S)-3-hydroxy-3-methylglutaryl-CoA is bound by residues cysteine 115 and threonine 156. Arginine 204 serves as a coordination point for CoA. Residues threonine 206 and histidine 239 each coordinate (3S)-3-hydroxy-3-methylglutaryl-CoA. Histidine 239 acts as the Proton donor/acceptor in catalysis. Lysine 244 is a binding site for CoA. 2 residues coordinate (3S)-3-hydroxy-3-methylglutaryl-CoA: asparagine 271 and serine 301.

This sequence belongs to the thiolase-like superfamily. Archaeal HMG-CoA synthase family. As to quaternary structure, interacts with acetoacetyl-CoA thiolase that catalyzes the precedent step in the pathway and with a DUF35 protein. The acetoacetyl-CoA thiolase/HMG-CoA synthase complex channels the intermediate via a fused CoA-binding site, which allows for efficient coupling of the endergonic thiolase reaction with the exergonic HMGCS reaction.

It carries out the reaction acetoacetyl-CoA + acetyl-CoA + H2O = (3S)-3-hydroxy-3-methylglutaryl-CoA + CoA + H(+). Its pathway is metabolic intermediate biosynthesis; (R)-mevalonate biosynthesis; (R)-mevalonate from acetyl-CoA: step 2/3. Catalyzes the condensation of acetyl-CoA with acetoacetyl-CoA to form 3-hydroxy-3-methylglutaryl-CoA (HMG-CoA). Functions in the mevalonate (MVA) pathway leading to isopentenyl diphosphate (IPP), a key precursor for the biosynthesis of isoprenoid compounds that are building blocks of archaeal membrane lipids. The chain is Hydroxymethylglutaryl-CoA synthase from Pyrococcus furiosus (strain ATCC 43587 / DSM 3638 / JCM 8422 / Vc1).